Here is a 238-residue protein sequence, read N- to C-terminus: Ribitol-5-phosphate cytidylyltransferase 1 (238 aa).

Residues 7 to 10 (LAGG) and 81 to 87 (GSDRNDT) each bind CTP.

The protein belongs to the IspD/TarI cytidylyltransferase family. TarI subfamily.

The enzyme catalyses D-ribitol 5-phosphate + CTP + H(+) = CDP-L-ribitol + diphosphate. It functions in the pathway cell wall biogenesis; poly(ribitol phosphate) teichoic acid biosynthesis. Its function is as follows. Catalyzes the transfer of the cytidylyl group of CTP to D-ribitol 5-phosphate. The chain is Ribitol-5-phosphate cytidylyltransferase 1 from Staphylococcus aureus (strain bovine RF122 / ET3-1).